The following is a 51-amino-acid chain: uncharacterized protein (51 aa).

This sequence to E.coli YdfA.

This is an uncharacterized protein from Escherichia coli O157:H7.